The primary structure comprises 405 residues: Probable tRNA sulfurtransferase (405 aa).

The THUMP domain maps to 60–165 (ETIDQRLKLV…QDAIYISNQL (106 aa)). ATP is bound by residues 183–184 (ML), 208–209 (HF), Arg265, Gly287, and Gln296.

The protein belongs to the ThiI family.

The protein resides in the cytoplasm. The catalysed reaction is [ThiI sulfur-carrier protein]-S-sulfanyl-L-cysteine + a uridine in tRNA + 2 reduced [2Fe-2S]-[ferredoxin] + ATP + H(+) = [ThiI sulfur-carrier protein]-L-cysteine + a 4-thiouridine in tRNA + 2 oxidized [2Fe-2S]-[ferredoxin] + AMP + diphosphate. The enzyme catalyses [ThiS sulfur-carrier protein]-C-terminal Gly-Gly-AMP + S-sulfanyl-L-cysteinyl-[cysteine desulfurase] + AH2 = [ThiS sulfur-carrier protein]-C-terminal-Gly-aminoethanethioate + L-cysteinyl-[cysteine desulfurase] + A + AMP + 2 H(+). It functions in the pathway cofactor biosynthesis; thiamine diphosphate biosynthesis. Its function is as follows. Catalyzes the ATP-dependent transfer of a sulfur to tRNA to produce 4-thiouridine in position 8 of tRNAs, which functions as a near-UV photosensor. Also catalyzes the transfer of sulfur to the sulfur carrier protein ThiS, forming ThiS-thiocarboxylate. This is a step in the synthesis of thiazole, in the thiamine biosynthesis pathway. The sulfur is donated as persulfide by IscS. The polypeptide is Probable tRNA sulfurtransferase (Lactobacillus johnsonii (strain CNCM I-12250 / La1 / NCC 533)).